An 84-amino-acid chain; its full sequence is MNLFDFFRANKKPSTASVAKERLQIIVAHERGQRSTPDYLPSLQKELVEVIRKYVNIGNDDVHVALESQGSCSILELNITLPDR.

It belongs to the MinE family.

Its function is as follows. Prevents the cell division inhibition by proteins MinC and MinD at internal division sites while permitting inhibition at polar sites. This ensures cell division at the proper site by restricting the formation of a division septum at the midpoint of the long axis of the cell. This chain is Cell division topological specificity factor, found in Pseudomonas fluorescens (strain Pf0-1).